We begin with the raw amino-acid sequence, 896 residues long: Zinc finger protein 574 (896 aa).

C2H2-type zinc fingers lie at residues tyrosine 16–histidine 38, tyrosine 76–histidine 98, and tyrosine 126–histidine 148. Phosphoserine is present on serine 164. Residues tyrosine 214–histidine 236 form a C2H2-type 4 zinc finger. The span at valine 259–serine 272 shows a compositional bias: low complexity. The disordered stretch occupies residues valine 259–glycine 303. Residues histidine 274–aspartate 287 show a composition bias toward basic and acidic residues. The residue at position 298 (serine 298) is a Phosphoserine. 4 consecutive C2H2-type zinc fingers follow at residues leucine 309–histidine 331, phenylalanine 336–histidine 358, phenylalanine 364–histidine 386, and histidine 392–histidine 413. A disordered region spans residues phenylalanine 434 to proline 460. 6 C2H2-type zinc fingers span residues tyrosine 466–histidine 489, histidine 495–histidine 517, phenylalanine 523–histidine 545, tyrosine 551–histidine 573, tyrosine 579–histidine 601, and tyrosine 607–histidine 630. The C2H2-type 15; degenerate zinc-finger motif lies at histidine 636–alanine 659. A C2H2-type 16 zinc finger spans residues phenylalanine 667 to histidine 689. A disordered region spans residues alanine 687–alanine 733. Low complexity predominate over residues alanine 707–proline 732. Serine 717 carries the post-translational modification Phosphoserine. 4 C2H2-type zinc fingers span residues leucine 738 to histidine 760, tyrosine 766 to histidine 788, phenylalanine 794 to histidine 816, and tyrosine 822 to histidine 844. Residue arginine 832 is modified to Asymmetric dimethylarginine.

Belongs to the krueppel C2H2-type zinc-finger protein family.

The protein localises to the nucleus. Its function is as follows. May be involved in transcriptional regulation. The protein is Zinc finger protein 574 (ZNF574) of Bos taurus (Bovine).